Reading from the N-terminus, the 873-residue chain is Potassium voltage-gated channel subfamily KQT member 3 (873 aa).

A disordered region spans residues 1 to 41 (MGLKARRAAGAAGGGGGEGGGGGGGAANPAGGDSAVAGDEE). Residues 1 to 121 (MGLKARRAAG…IYDALERPRG (121 aa)) are Cytoplasmic-facing. Positions 11–26 (AAGGGGGEGGGGGGGA) are enriched in gly residues. T82 is modified (phosphothreonine). The helical transmembrane segment at 122 to 144 (WALLYHALVFLIVLGCLILAVLT) threads the bilayer. Residues 145–154 (TFKEYETVSG) lie on the Extracellular side of the membrane. Residues 155–176 (DWLLLLETFAIFIFGAEFALRI) form a helical membrane-spanning segment. Topologically, residues 177 to 194 (WAAGCCCRYKGWRGRLKF) are cytoplasmic. A helical membrane pass occupies residues 195-214 (ARKPLCMLDIFVLIASVPVV). At 215–226 (AVGNQGNVLATS) the chain is on the extracellular side. Residues 227 to 245 (LRSLRFLQILRMLRMDRRG) traverse the membrane as a helical; Voltage-sensor segment. R244 provides a ligand contact to a 1,2-diacyl-sn-glycero-3-phospho-(1D-myo-inositol-4,5-bisphosphate). The Cytoplasmic portion of the chain corresponds to 246-257 (GTWKLLGSAICA). The helical transmembrane segment at 258-283 (HSKELITAWYIGFLTLILSSFLVYLV) threads the bilayer. Position 260 (K260) interacts with a 1,2-diacyl-sn-glycero-3-phospho-(1D-myo-inositol-4,5-bisphosphate). Over 284–303 (EKDVPEMDAQGEEMKEEFET) the chain is Extracellular. An intramembrane region (pore-forming) is located at residues 304 to 316 (YADALWWGLITLA). Residues 317 to 322 (TIGYGD) carry the Selectivity filter motif. The Extracellular portion of the chain corresponds to 317–327 (TIGYGDKTPKT). A helical membrane pass occupies residues 328 to 354 (WEGRLIAATFSLIGVSFFALPAGILGS). Topologically, residues 355–873 (GLALKVQEQH…SIWTPSNKPT (519 aa)) are cytoplasmic. Residues 357 to 538 (ALKVQEQHRQ…RLYKKKFKET (182 aa)) are mediates interaction with calmodulin. K367 lines the a 1,2-diacyl-sn-glycero-3-phospho-(1D-myo-inositol-4,5-bisphosphate) pocket. 3 disordered regions span residues 575–603 (PGPP…PRNE), 723–742 (RGGP…GSTY), and 766–873 (ELQG…NKPT). Polar residues-rich tracts occupy residues 588–601 (KGSA…QSPR), 725–741 (GPSS…SGST), and 844–873 (DPFT…NKPT).

Belongs to the potassium channel family. KQT (TC 1.A.1.15) subfamily. Kv7.3/KCNQ3 sub-subfamily. In terms of assembly, heterotetramer with KCNQ2; forms heterotetrameric native M-channel responsible for the M-current. Interacts with calmodulin; the interaction is calcium-independent, constitutive and participates in the proper assembly of a functional M-channel. Heteromultimer with KCNQ5. May associate with KCNE2. Interacts with IQCJ-SCHIP1. Interacts (via the pore module) with SLC5A3/SMIT1; forms a coregulatory complex that alters ion selectivity, voltage dependence and gating kinetics of the channel. In terms of processing, KCNQ2/KCNQ3 are ubiquitinated by NEDD4L. Ubiquitination leads to protein degradation. Degradation induced by NEDD4L is inhibited by USP36. In terms of tissue distribution, expressed in dorsal root ganglion (DRG) neurons.

It localises to the cell membrane. It catalyses the reaction K(+)(in) = K(+)(out). The enzyme catalyses Rb(+)(in) = Rb(+)(out). It carries out the reaction Cs(+)(in) = Cs(+)(out). The catalysed reaction is Na(+)(in) = Na(+)(out). Its activity is regulated as follows. Phosphatidylinositol-4,5-bisphosphate (PIP2) potentiates the activation of KCNQ channels by enhancing the electro-mechanical coupling of the voltage-sensing domain (VSD) and the pore-forming domain (PD). In the closed state of the channel, PIP2 is anchored at the S2-S3 loop; upon channel activation, PIP2 interacts with the S4-S5 linker and is involved in channel gating. Calcium suppresses KCNQ2-KCNQ3 channel currents, with calcium-bound calmodulin inducing a change in channel configuration which leads to the reduction of channel affinity for PIP2 and subsequent current suppression. Its function is as follows. Pore-forming subunit of the voltage-gated potassium (Kv) M-channel which is responsible for the M-current, a key controller of neuronal excitability. M-channel is composed of pore-forming subunits KCNQ2 and KCNQ3 assembled as heterotetramers. The native M-current has a slowly activating and deactivating potassium conductance which plays a critical role in determining the subthreshold electrical excitability of neurons as well as the responsiveness to synaptic inputs. M-channel is selectively permeable in vitro to other cations besides potassium, in decreasing order of affinity K(+) &gt; Rb(+) &gt; Cs(+) &gt; Na(+). M-channel association with SLC5A3/SMIT1 alters channel ion selectivity, increasing Na(+) and Cs(+) permeation relative to K(+). Suppressed by activation of M1 muscarinic acetylcholine receptors. KCNQ3 also associates with KCNQ5 to form a functional channel in vitro and may also contribute to the M-current in brain. This chain is Potassium voltage-gated channel subfamily KQT member 3, found in Mus musculus (Mouse).